The chain runs to 429 residues: Serine hydroxymethyltransferase (429 aa).

(6S)-5,6,7,8-tetrahydrofolate is bound by residues Leu130 and 134 to 136 (GHL). An N6-(pyridoxal phosphate)lysine modification is found at Lys239.

Belongs to the SHMT family. In terms of assembly, homodimer. Pyridoxal 5'-phosphate is required as a cofactor.

It localises to the cytoplasm. It catalyses the reaction (6R)-5,10-methylene-5,6,7,8-tetrahydrofolate + glycine + H2O = (6S)-5,6,7,8-tetrahydrofolate + L-serine. The protein operates within one-carbon metabolism; tetrahydrofolate interconversion. It functions in the pathway amino-acid biosynthesis; glycine biosynthesis; glycine from L-serine: step 1/1. Catalyzes the reversible interconversion of serine and glycine with tetrahydrofolate (THF) serving as the one-carbon carrier. This reaction serves as the major source of one-carbon groups required for the biosynthesis of purines, thymidylate, methionine, and other important biomolecules. Also exhibits THF-independent aldolase activity toward beta-hydroxyamino acids, producing glycine and aldehydes, via a retro-aldol mechanism. This chain is Serine hydroxymethyltransferase, found in Phenylobacterium zucineum (strain HLK1).